The sequence spans 322 residues: GDSL esterase/lipase At2g04020 (322 aa).

Residues 1–26 (MGLPSSLESYLLLILLSFLNVSTIYS) form the signal peptide. The active-site Nucleophile is S50. N260 carries N-linked (GlcNAc...) asparagine glycosylation. Catalysis depends on residues D296 and H299.

It belongs to the 'GDSL' lipolytic enzyme family.

The protein resides in the secreted. The sequence is that of GDSL esterase/lipase At2g04020 from Arabidopsis thaliana (Mouse-ear cress).